Here is an 80-residue protein sequence, read N- to C-terminus: U19-lycotoxin-Ls1a (80 aa).

A signal peptide spans 1 to 22; the sequence is MSPKVQALIFIVGLITLLAAHA. Residues 23–34 constitute a propeptide that is removed on maturation; it reads QEELSDNTESER. 4 cysteine pairs are disulfide-bonded: cysteine 36–cysteine 50, cysteine 43–cysteine 55, cysteine 49–cysteine 66, and cysteine 57–cysteine 64.

The protein belongs to the neurotoxin 02 (plectoxin) family. 05 (U19-lycotoxin) subfamily. Expressed by the venom gland.

It localises to the secreted. In Lycosa singoriensis (Wolf spider), this protein is U19-lycotoxin-Ls1a.